A 268-amino-acid chain; its full sequence is Ubiquinone biosynthesis protein COQ4 homolog, mitochondrial (268 aa).

H171, D172, H175, and E187 together coordinate Zn(2+).

The protein belongs to the COQ4 family. In terms of assembly, component of a multi-subunit COQ enzyme complex. It depends on Zn(2+) as a cofactor.

The protein resides in the mitochondrion inner membrane. It carries out the reaction a 4-hydroxy-3-methoxy-5-(all-trans-polyprenyl)benzoate + H(+) = a 2-methoxy-6-(all-trans-polyprenyl)phenol + CO2. It participates in cofactor biosynthesis; ubiquinone biosynthesis. In terms of biological role, lyase that catalyzes the C1-decarboxylation of 4-hydroxy-3-methoxy-5-(all-trans-polyprenyl)benzoic acid into 2-methoxy-6-(all-trans-polyprenyl)phenol during ubiquinone biosynthesis. In Drosophila sechellia (Fruit fly), this protein is Ubiquinone biosynthesis protein COQ4 homolog, mitochondrial.